The primary structure comprises 204 residues: MAEDTYSHKMVKTNHRRCRTKFTEEQLKILINTFNQKPYPGYATKQKLALEINTEESRIQIWFQNRRARHGFQKRPEAETLESSQSQGQDQPGVEFQSREARRCRTTYSASQLHTLIKAFMKNPYPGIDSREELAKEIGVPESRVQIWFQNRRSRLLLQRKREPVASLEQEEQGKIPEGLQGAEDTQNGTNFTSDSHFSGARTW.

Residues 15 to 74 constitute a DNA-binding region (homeobox 1); sequence HRRCRTKFTEEQLKILINTFNQKPYPGYATKQKLALEINTEESRIQIWFQNRRARHGFQK. Disordered regions lie at residues 73–101 and 163–204; these read QKRPEAETLESSQSQGQDQPGVEFQSREA and EPVA…ARTW. A compositionally biased stretch (polar residues) spans 81 to 90; it reads LESSQSQGQD. A DNA-binding region (homeobox 2) is located at residues 101-160; the sequence is ARRCRTTYSASQLHTLIKAFMKNPYPGIDSREELAKEIGVPESRVQIWFQNRRSRLLLQR. Positions 184-197 are enriched in polar residues; the sequence is EDTQNGTNFTSDSH.

Belongs to the paired homeobox family. In terms of tissue distribution, expressed in embryonic stem cells.

The protein localises to the nucleus. In terms of biological role, transcription factor that acts as a repressor. The polypeptide is Double homeobox protein A (Homo sapiens (Human)).